A 508-amino-acid chain; its full sequence is MGLPWYRVHTVVLNDPGRLLSVHLMHTALVSGWAGSMALYELAVFDPSDPVLDPMWRQGMFVIPFMTRIGITKSWGGWSITGDTVNDAGIWSYEGVAASHIVLSGLLFLAAIWHWVYWDLDLFRDERTGKPSLDLPKIFGIHLFLSGVLCFGFGAFHITGLFGPGIWVSDPYGLTGKVQPVDPAWGAEGFDPFVPGGIASHHIAAGILGILAGLFHLSVRPPQRLYKALRMGNVETVLSSSIAAVFFAAFVVAGTMWYGSATTPIELFGPTRYQWDQGYFQQEIDRRIRASKAENLSLSEAWSKIPEKLAFYDYIGNNPAKGGLFRAGAMDNGDGIAVGWLGHATFKDKEGHELFVRRMPTFFETFPVVLVDEEGVVRADVPFRRAESKYSVEQVGVTVEFYGGELDGVSFSDPATVKKYARRAQLGEIFEFDRATLKSDGVFRSSPRGWFTFGHATFALIFFFGHIWHGARTLFRDVFAGIDPDLDAQVEFGAFQKLGDPTTKRQAV.

The next 6 helical transmembrane spans lie at Ser-21 to Ser-36, Ile-101 to Trp-115, Gly-140 to Phe-156, Ile-203 to Ser-218, Val-237 to Val-252, and Thr-457 to Arg-472.

This sequence belongs to the PsbB/PsbC family. PsbB subfamily. PSII is composed of 1 copy each of membrane proteins PsbA, PsbB, PsbC, PsbD, PsbE, PsbF, PsbH, PsbI, PsbJ, PsbK, PsbL, PsbM, PsbT, PsbX, PsbY, PsbZ, Psb30/Ycf12, at least 3 peripheral proteins of the oxygen-evolving complex and a large number of cofactors. It forms dimeric complexes. Binds multiple chlorophylls. PSII binds additional chlorophylls, carotenoids and specific lipids. serves as cofactor.

It localises to the plastid. Its subcellular location is the chloroplast thylakoid membrane. Its function is as follows. One of the components of the core complex of photosystem II (PSII). It binds chlorophyll and helps catalyze the primary light-induced photochemical processes of PSII. PSII is a light-driven water:plastoquinone oxidoreductase, using light energy to abstract electrons from H(2)O, generating O(2) and a proton gradient subsequently used for ATP formation. In Angiopteris evecta (Mule's foot fern), this protein is Photosystem II CP47 reaction center protein.